A 78-amino-acid chain; its full sequence is UPF0335 protein A1E_00570 (78 aa).

Belongs to the UPF0335 family.

The sequence is that of UPF0335 protein A1E_00570 from Rickettsia canadensis (strain McKiel).